A 69-amino-acid chain; its full sequence is DNA gyrase inhibitor YacG (69 aa).

Zn(2+) contacts are provided by C14, C17, C33, and C37. Residues 46–69 are disordered; sequence ADEEKSIPGAPDMSDSDGWSEDQY. A compositionally biased stretch (acidic residues) spans 59-69; it reads SDSDGWSEDQY.

Belongs to the DNA gyrase inhibitor YacG family. Interacts with GyrB. It depends on Zn(2+) as a cofactor.

Its function is as follows. Inhibits all the catalytic activities of DNA gyrase by preventing its interaction with DNA. Acts by binding directly to the C-terminal domain of GyrB, which probably disrupts DNA binding by the gyrase. The protein is DNA gyrase inhibitor YacG of Aliivibrio fischeri (strain ATCC 700601 / ES114) (Vibrio fischeri).